A 161-amino-acid chain; its full sequence is Cyclic pyranopterin monophosphate synthase (161 aa).

Substrate-binding positions include Leu73 to His75 and Met110 to Glu111. Asp125 is a catalytic residue.

This sequence belongs to the MoaC family. As to quaternary structure, homohexamer; trimer of dimers.

It carries out the reaction (8S)-3',8-cyclo-7,8-dihydroguanosine 5'-triphosphate = cyclic pyranopterin phosphate + diphosphate. The protein operates within cofactor biosynthesis; molybdopterin biosynthesis. Functionally, catalyzes the conversion of (8S)-3',8-cyclo-7,8-dihydroguanosine 5'-triphosphate to cyclic pyranopterin monophosphate (cPMP). The chain is Cyclic pyranopterin monophosphate synthase from Pseudomonas syringae pv. syringae (strain B728a).